The following is a 147-amino-acid chain: Flagellar assembly factor FliW (147 aa).

This sequence belongs to the FliW family. Interacts with translational regulator CsrA and flagellin(s).

Its subcellular location is the cytoplasm. Functionally, acts as an anti-CsrA protein, binds CsrA and prevents it from repressing translation of its target genes, one of which is flagellin. Binds to flagellin and participates in the assembly of the flagellum. The chain is Flagellar assembly factor FliW from Chromobacterium violaceum (strain ATCC 12472 / DSM 30191 / JCM 1249 / CCUG 213 / NBRC 12614 / NCIMB 9131 / NCTC 9757 / MK).